The sequence spans 165 residues: Crossover junction endodeoxyribonuclease RuvC (165 aa).

Active-site residues include Asp8, Glu66, and Asp138. The Mg(2+) site is built by Asp8, Glu66, and Asp138.

Belongs to the RuvC family. Homodimer which binds Holliday junction (HJ) DNA. The HJ becomes 2-fold symmetrical on binding to RuvC with unstacked arms; it has a different conformation from HJ DNA in complex with RuvA. In the full resolvosome a probable DNA-RuvA(4)-RuvB(12)-RuvC(2) complex forms which resolves the HJ. Mg(2+) serves as cofactor.

The protein resides in the cytoplasm. The enzyme catalyses Endonucleolytic cleavage at a junction such as a reciprocal single-stranded crossover between two homologous DNA duplexes (Holliday junction).. Functionally, the RuvA-RuvB-RuvC complex processes Holliday junction (HJ) DNA during genetic recombination and DNA repair. Endonuclease that resolves HJ intermediates. Cleaves cruciform DNA by making single-stranded nicks across the HJ at symmetrical positions within the homologous arms, yielding a 5'-phosphate and a 3'-hydroxyl group; requires a central core of homology in the junction. The consensus cleavage sequence is 5'-(A/T)TT(C/G)-3'. Cleavage occurs on the 3'-side of the TT dinucleotide at the point of strand exchange. HJ branch migration catalyzed by RuvA-RuvB allows RuvC to scan DNA until it finds its consensus sequence, where it cleaves and resolves the cruciform DNA. The sequence is that of Crossover junction endodeoxyribonuclease RuvC from Methylococcus capsulatus (strain ATCC 33009 / NCIMB 11132 / Bath).